A 332-amino-acid polypeptide reads, in one-letter code: Formamidase (332 aa).

The CN hydrolase domain occupies 14–259; that stretch reads FLTALIQYPV…WEIVTAEVYP (246 aa). The active-site Proton acceptor is the E60. K132 serves as the catalytic Proton donor. The active-site Nucleophile is C165.

It belongs to the carbon-nitrogen hydrolase superfamily. Aliphatic amidase family.

It catalyses the reaction formamide + H2O = formate + NH4(+). Its function is as follows. Is an aliphatic amidase with a restricted substrate specificity, as it only hydrolyzes formamide. The protein is Formamidase of Bacillus thuringiensis (strain Al Hakam).